We begin with the raw amino-acid sequence, 308 residues long: 1D-myo-inositol 2-acetamido-2-deoxy-alpha-D-glucopyranoside deacetylase (308 aa).

Residues histidine 13, aspartate 16, and histidine 147 each coordinate Zn(2+).

It belongs to the MshB deacetylase family. It depends on Zn(2+) as a cofactor.

The catalysed reaction is 1D-myo-inositol 2-acetamido-2-deoxy-alpha-D-glucopyranoside + H2O = 1D-myo-inositol 2-amino-2-deoxy-alpha-D-glucopyranoside + acetate. In terms of biological role, catalyzes the deacetylation of 1D-myo-inositol 2-acetamido-2-deoxy-alpha-D-glucopyranoside (GlcNAc-Ins) in the mycothiol biosynthesis pathway. The polypeptide is 1D-myo-inositol 2-acetamido-2-deoxy-alpha-D-glucopyranoside deacetylase (Mycobacterium leprae (strain Br4923)).